A 970-amino-acid polypeptide reads, in one-letter code: Rho GTPase-activating protein gacK (970 aa).

The first 20 residues, 1–20, serve as a signal peptide directing secretion; the sequence is MTLVYEKSSFVLIMAQIAEA. Disordered stretches follow at residues 30–49, 258–285, 312–446, 487–550, and 860–886; these read SNDL…SAAI, STCS…INQN, EITI…FSPT, STSN…NNNN, and TASS…NDDP. Composition is skewed to low complexity over residues 35 to 49 and 258 to 269; these read STSA…SAAI and STCSLSSNASNN. A compositionally biased stretch (pro residues) spans 321–333; it reads IPLPPQSSSPPPT. Positions 334 to 383 are enriched in low complexity; it reads RNNQSSPSPSSPQQQNIMPTPPSTSLTPPQSPTLSPSSSTHSTPTQTTTT. Over residues 392–406 the composition is skewed to polar residues; it reads PSTISQNNARKTQIP. Residues 407–426 show a composition bias toward low complexity; that stretch reads TTTTTTTTTTTTTSTTSTTS. The segment covering 427–446 has biased composition (polar residues); the sequence is PNPVVNNKNLNTPSSSFSPT. The 217-residue stretch at 754 to 970 folds into the Rho-GAP domain; that stretch reads IEDSELVEDN…LELIQFNKSL (217 aa). The segment covering 860–885 has biased composition (low complexity); the sequence is TASSAATANSSSSGSGNGNSSPNNDD.

The protein localises to the cytoplasm. Rho GTPase-activating protein involved in the signal transduction pathway. This Dictyostelium discoideum (Social amoeba) protein is Rho GTPase-activating protein gacK (gacK).